The sequence spans 203 residues: Cytochrome c biogenesis CcmF N-terminal-like mitochondrial protein 2 (203 aa).

Transmembrane regions (helical) follow at residues 44–64 and 143–163; these read IWILTCWWFLTVGILLGSWWA and IFLWWFFLLMTGISMILFYQM.

The protein belongs to the CcmF/CycK/Ccl1/NrfE/CcsA family. Interacts with CCMFC, CCMFN1, CCMH and CYTC-1.

The protein localises to the mitochondrion inner membrane. In terms of biological role, forms a complex with CCMFC, CCMFN1 and CCMH that performs the assembly of heme with c-type apocytochromes in mitochondria. This chain is Cytochrome c biogenesis CcmF N-terminal-like mitochondrial protein 2, found in Arabidopsis thaliana (Mouse-ear cress).